We begin with the raw amino-acid sequence, 136 residues long: General odorant-binding protein 57d (136 aa).

Positions 1–29 are cleaved as a signal peptide; sequence MPEKMSLRLVPHLACIIFILEIQFRIADS. 3 disulfide bridges follow: C33/C70, C66/C118, and C107/C127.

Belongs to the PBP/GOBP family.

In terms of biological role, present in the aqueous fluid surrounding olfactory sensory dendrites and are thought to aid in the capture and transport of hydrophobic odorants into and through this fluid. This chain is General odorant-binding protein 57d, found in Drosophila melanogaster (Fruit fly).